A 55-amino-acid polypeptide reads, in one-letter code: Large ribosomal subunit protein bL32c (55 aa).

Positions 1–24 (MAVPKKRTSKSKKNARKANWKRKG) are disordered.

This sequence belongs to the bacterial ribosomal protein bL32 family.

Its subcellular location is the plastid. It localises to the chloroplast. This is Large ribosomal subunit protein bL32c from Phaeodactylum tricornutum (strain CCAP 1055/1).